Consider the following 517-residue polypeptide: Crotonobetaine/carnitine--CoA ligase (517 aa).

Belongs to the ATP-dependent AMP-binding enzyme family.

The enzyme catalyses 4-(trimethylamino)butanoate + ATP + CoA = 4-(trimethylamino)butanoyl-CoA + AMP + diphosphate. The catalysed reaction is crotonobetaine + ATP + CoA = crotonobetainyl-CoA + AMP + diphosphate. It catalyses the reaction (R)-carnitine + ATP + CoA = (R)-carnitinyl-CoA + AMP + diphosphate. It functions in the pathway amine and polyamine metabolism; carnitine metabolism. Functionally, catalyzes the transfer of CoA to carnitine, generating the initial carnitinyl-CoA needed for the CaiB reaction cycle. Also has activity toward crotonobetaine and gamma-butyrobetaine. The chain is Crotonobetaine/carnitine--CoA ligase from Salmonella enteritidis PT4 (strain P125109).